The sequence spans 284 residues: Acetylglutamate kinase (284 aa).

Substrate-binding positions include 54-55 (GG), R76, and N179.

Belongs to the acetylglutamate kinase family. ArgB subfamily.

The protein localises to the cytoplasm. The enzyme catalyses N-acetyl-L-glutamate + ATP = N-acetyl-L-glutamyl 5-phosphate + ADP. It participates in amino-acid biosynthesis; L-arginine biosynthesis; N(2)-acetyl-L-ornithine from L-glutamate: step 2/4. Its function is as follows. Catalyzes the ATP-dependent phosphorylation of N-acetyl-L-glutamate. In Sorangium cellulosum (strain So ce56) (Polyangium cellulosum (strain So ce56)), this protein is Acetylglutamate kinase.